A 270-amino-acid polypeptide reads, in one-letter code: L-fucose dehydrogenase (270 aa).

12 residues coordinate NAD(+): Arg-19, Ile-21, Asp-40, Lys-41, Asp-62, Val-63, Asn-89, Tyr-154, Lys-158, Ile-187, Thr-189, and Leu-191. The active-site Proton acceptor is Tyr-154.

The protein belongs to the short-chain dehydrogenases/reductases (SDR) family. Homotetramer. Highly expressed in brain, placenta, liver and kidney.

It is found in the cytoplasm. The catalysed reaction is L-fucose + NAD(+) = L-fucono-1,5-lactone + NADH + H(+). It catalyses the reaction D-arabinose + NAD(+) = D-arabinono-1,5-lactone + NADH + H(+). The enzyme catalyses L-galactose + NAD(+) = L-galactono-1,5-lactone + NADH + H(+). It functions in the pathway carbohydrate degradation; L-fucose degradation. In terms of biological role, catalyzes the NAD(+)-dependent oxidation of L-fucose, yielding L-fucono-1,5-lactone, which rapidly converts spontaneously to L-fucone-1,4-lactone. Can also act on D-arabinose and L-galactose, with lower catalytic efficiency. Does not use NADPH. May be the initial enzyme of the L-fucose degradation pathway in mammals. The polypeptide is L-fucose dehydrogenase (Homo sapiens (Human)).